The chain runs to 1069 residues: Rab GTPase-activating protein 1 (1069 aa).

The interval 1 to 79 (MDDKASVGKI…DPPMDDQPGE (79 aa)) is disordered. Residues 7-22 (VGKISVSSDSVSTLNS) show a composition bias toward low complexity. Ser42 is modified (phosphoserine). Residues 142–298 (EDSVVFSKLT…IFTFSVSLEI (157 aa)) enclose the PID domain. Ser360 bears the Phosphoserine mark. The disordered stretch occupies residues 482–527 (ERERRKTTASPSVRLPQSGSQSSVIPSPPEDDEEEDNDEPLLSGSG). Positions 489–506 (TASPSVRLPQSGSQSSVI) are enriched in polar residues. Positions 510 to 520 (PEDDEEEDNDE) are enriched in acidic residues. One can recognise a Rab-GAP TBC domain in the interval 566-752 (GVPEALRGEV…HIIDLLLCEG (187 aa)). The stretch at 798–1047 (KKLMELACNM…ALNEVQAAKK (250 aa)) forms a coiled coil. Thr996 is subject to Phosphothreonine.

Interacts with RAB6A and tubulin gamma.

The protein resides in the cytoplasm. It is found in the cytosol. The protein localises to the cytoskeleton. It localises to the microtubule organizing center. Its subcellular location is the centrosome. Functionally, may act as a GTPase-activating protein of RAB6A. May play a role in microtubule nucleation by centrosome. May participate in a RAB6A-mediated pathway involved in the metaphase-anaphase transition. The protein is Rab GTPase-activating protein 1 of Pongo abelii (Sumatran orangutan).